The chain runs to 264 residues: Thymidylate synthase (264 aa).

DUMP is bound by residues R21 and 126 to 127 (RR). The active-site Nucleophile is the C146. DUMP contacts are provided by residues 166–169 (RSAD), N177, and 207–209 (HLY). Residue D169 coordinates (6R)-5,10-methylene-5,6,7,8-tetrahydrofolate. Position 263 (A263) interacts with (6R)-5,10-methylene-5,6,7,8-tetrahydrofolate.

It belongs to the thymidylate synthase family. Bacterial-type ThyA subfamily. As to quaternary structure, homodimer.

The protein resides in the cytoplasm. It carries out the reaction dUMP + (6R)-5,10-methylene-5,6,7,8-tetrahydrofolate = 7,8-dihydrofolate + dTMP. It participates in pyrimidine metabolism; dTTP biosynthesis. In terms of biological role, catalyzes the reductive methylation of 2'-deoxyuridine-5'-monophosphate (dUMP) to 2'-deoxythymidine-5'-monophosphate (dTMP) while utilizing 5,10-methylenetetrahydrofolate (mTHF) as the methyl donor and reductant in the reaction, yielding dihydrofolate (DHF) as a by-product. This enzymatic reaction provides an intracellular de novo source of dTMP, an essential precursor for DNA biosynthesis. The polypeptide is Thymidylate synthase (Rhodopseudomonas palustris (strain BisB5)).